The following is an 870-amino-acid chain: Probable coatomer subunit gamma (870 aa).

6 HEAT repeats span residues 60–97 (TEATEAFFGVTKLWQSKDVSLRRMVYLAVKELAEVSDD), 99–133 (IIVTSSLTKDMTGREDLYRAAAIRALCKITDTGML), 168–205 (EVVRRWANEVQEAVSSDNHMVQYHALALLYQIRANDRL), 278–315 (SEIQPAITALQMCCTSPKAAVRFAAVRTLNKVAMAHPN), 316–350 (AVMSCNVDLEKFITDPNRSIATLAITTLLKTGAES), and 389–425 (HTVMMPFLAKMLRSDGSYDYKKAIVETIIAIIEENPD).

This sequence belongs to the COPG family. As to quaternary structure, oligomeric complex that consists of at least the alpha, beta, beta', gamma, delta, epsilon and zeta subunits.

The protein resides in the cytoplasm. It is found in the golgi apparatus membrane. It localises to the cytoplasmic vesicle. Its subcellular location is the COPI-coated vesicle membrane. The coatomer is a cytosolic protein complex that binds to dilysine motifs and reversibly associates with Golgi non-clathrin-coated vesicles, which further mediate biosynthetic protein transport from the ER, via the Golgi up to the trans Golgi network. Coatomer complex is required for budding from Golgi membranes, and is essential for the retrograde Golgi-to-ER transport of dilysine-tagged proteins. This chain is Probable coatomer subunit gamma, found in Caenorhabditis elegans.